A 109-amino-acid chain; its full sequence is Cytochrome c-550 (109 aa).

Cys-13, Cys-16, His-17, and Met-79 together coordinate heme c.

Post-translationally, binds 1 heme c group covalently per subunit.

The polypeptide is Cytochrome c-550 (Nitrobacter winogradskyi (Nitrobacter agilis)).